The primary structure comprises 200 residues: LexA repressor (200 aa).

Residues 27–47 (VREICNAVELRSTSTVHGHLK) constitute a DNA-binding region (H-T-H motif). Catalysis depends on for autocatalytic cleavage activity residues Ser-124 and Lys-161.

Belongs to the peptidase S24 family. In terms of assembly, homodimer.

It catalyses the reaction Hydrolysis of Ala-|-Gly bond in repressor LexA.. Functionally, represses a number of genes involved in the response to DNA damage (SOS response), including recA and lexA. In the presence of single-stranded DNA, RecA interacts with LexA causing an autocatalytic cleavage which disrupts the DNA-binding part of LexA, leading to derepression of the SOS regulon and eventually DNA repair. This Clostridium tetani (strain Massachusetts / E88) protein is LexA repressor.